The sequence spans 1868 residues: Dedicator of cytokinesis protein 5 (1868 aa).

Residues 8 to 69 (KRQKYGVAIY…PETYIHLKEA (62 aa)) form the SH3 domain. A Phosphoserine modification is found at serine 365. Residues 443-627 (RNDIYVTLIH…DSFQIATLIC (185 aa)) form the C2 DOCK-type domain. Lysine 818 carries the post-translational modification N6-acetyllysine. The 412-residue stretch at 1231–1642 (YKDKKREDIY…VEKLYGVITL (412 aa)) folds into the DOCKER domain. The segment covering 1681 to 1692 (STSSNSSDNASS) has biased composition (low complexity). Disordered regions lie at residues 1681–1730 (STSS…RISK) and 1742–1868 (QVIA…PGSQ). The segment covering 1704–1728 (LFERRASSGARVEDLPPKEDSENRI) has biased composition (basic and acidic residues). Phosphoserine is present on residues serine 1755, serine 1765, serine 1771, serine 1784, and serine 1788. Residue threonine 1793 is modified to Phosphothreonine. Over residues 1796–1810 (ATRTLSSPSLQTDGL) the composition is skewed to polar residues. Residues serine 1832 and serine 1867 each carry the phosphoserine modification.

Belongs to the DOCK family. As to quaternary structure, interacts with CRK and CRKL. Interacts (via N-terminus) with tensin TNS3 (via N-terminus); the interaction increases DOCK5 guanine nucleotide exchange activity towards Rac. Interacts with ELMO1. In terms of tissue distribution, highly expressed in lens, where it predominantly localizes to anterior epithelial cells, and is weakly expressed in lens fiber (at protein level). Expressed in brain, eye, lung, spleen and kidney, but not in thymus or peripheral blood leukocytes.

The protein resides in the cytoplasm. Its subcellular location is the cell membrane. It is found in the cell projection. It localises to the podosome. Its function is as follows. Guanine nucleotide exchange factor (GEF) for Rho and Rac. GEF proteins activate small GTPases by exchanging bound GDP for free GTP. Along with DOCK1, mediates CRK/CRKL regulation of epithelial and endothelial cell spreading and migration on type IV collagen. This is Dedicator of cytokinesis protein 5 from Mus musculus (Mouse).